Consider the following 91-residue polypeptide: Small ribosomal subunit protein bS18 (91 aa).

Positions 1–21 are disordered; it reads MSDERTPQRSSGPRKKRPFQR. Positions 12–21 are enriched in basic residues; the sequence is GPRKKRPFQR.

The protein belongs to the bacterial ribosomal protein bS18 family. Part of the 30S ribosomal subunit. Forms a tight heterodimer with protein bS6.

Binds as a heterodimer with protein bS6 to the central domain of the 16S rRNA, where it helps stabilize the platform of the 30S subunit. This Geotalea uraniireducens (strain Rf4) (Geobacter uraniireducens) protein is Small ribosomal subunit protein bS18.